The chain runs to 227 residues: Small ribosomal subunit protein uS5 (227 aa).

Residues 1–22 (MSKRSNRSNNKNNTNKFNIENW) form a disordered region. Residues 7–18 (RSNNKNNTNKFN) show a composition bias toward low complexity. The S5 DRBM domain maps to 63–126 (LEEEVMDVNL…DAAKYNLIKV (64 aa)).

Belongs to the universal ribosomal protein uS5 family. As to quaternary structure, part of the 30S ribosomal subunit. Contacts protein S4.

Functionally, with S4 and S12 plays an important role in translational accuracy. The chain is Small ribosomal subunit protein uS5 from Methanosphaera stadtmanae (strain ATCC 43021 / DSM 3091 / JCM 11832 / MCB-3).